The chain runs to 187 residues: Crossover junction endodeoxyribonuclease RuvC (187 aa).

Catalysis depends on residues D7, E67, and D140. 3 residues coordinate Mg(2+): D7, E67, and D140.

Belongs to the RuvC family. In terms of assembly, homodimer which binds Holliday junction (HJ) DNA. The HJ becomes 2-fold symmetrical on binding to RuvC with unstacked arms; it has a different conformation from HJ DNA in complex with RuvA. In the full resolvosome a probable DNA-RuvA(4)-RuvB(12)-RuvC(2) complex forms which resolves the HJ. Mg(2+) is required as a cofactor.

It localises to the cytoplasm. It carries out the reaction Endonucleolytic cleavage at a junction such as a reciprocal single-stranded crossover between two homologous DNA duplexes (Holliday junction).. Its function is as follows. The RuvA-RuvB-RuvC complex processes Holliday junction (HJ) DNA during genetic recombination and DNA repair. Endonuclease that resolves HJ intermediates. Cleaves cruciform DNA by making single-stranded nicks across the HJ at symmetrical positions within the homologous arms, yielding a 5'-phosphate and a 3'-hydroxyl group; requires a central core of homology in the junction. The consensus cleavage sequence is 5'-(A/T)TT(C/G)-3'. Cleavage occurs on the 3'-side of the TT dinucleotide at the point of strand exchange. HJ branch migration catalyzed by RuvA-RuvB allows RuvC to scan DNA until it finds its consensus sequence, where it cleaves and resolves the cruciform DNA. In Chlorobium phaeobacteroides (strain DSM 266 / SMG 266 / 2430), this protein is Crossover junction endodeoxyribonuclease RuvC.